The sequence spans 98 residues: Citrate lyase acyl carrier protein (98 aa).

Ser-14 is modified (O-(phosphoribosyl dephospho-coenzyme A)serine).

This sequence belongs to the CitD family. Oligomer with a subunit composition of (alpha,beta,gamma)6.

Its subcellular location is the cytoplasm. Covalent carrier of the coenzyme of citrate lyase. This chain is Citrate lyase acyl carrier protein, found in Vibrio cholerae serotype O1 (strain ATCC 39315 / El Tor Inaba N16961).